The following is a 614-amino-acid chain: MSKVIGIDLGTTNSCIAILEGDEPKVIQNPEGARTTPSVVAFKNDETQVGEVAKRQAITNPNTIQSIKRHMGTDYKVDVDGKSYTPQEISAMVLQNLKSTAEDYLGESVDKAVITVPAYFNDSERQATKDAGKIAGLEVERIINEPTAAALAYGLDKTEQDQKVLVFDLGGGTFDVSILELGDGVFEVLSTAGDNKLGGDDFDQVIIDHLVAEFKKENSVDLSKDKMALQRLKDAAEKAKKDLSGVSQTQISLPFISAGENGPLHLELTLTRSKFEELADSLIRRTMEPTRQAMKDAGLSSSDIDEVILVGGSTRIPAVQEAVKKEVGKDPHKGVNPDEVVAMGAAIQGGVITGDVKDVVLLDVTPLSLGIEIMGGRMNTLIERNTTIPTSKSQVYSTAADNQPAVDIHVLQGERPMAADNKTLGRFQLTDIPAAPRGVPQIEVTFDIDKNGIVNVTAKDLGTNKEQNITIQSSSALSDDEIDRMVKDAEENAEADKKRREESDLRNEADSLVFQVEKTITDLGENISEEDKQNAEDKKEALKSALEGEDIDDIKAKKEDLEKVVQDLSTKVYEQAAQAQQQAQGEDANASQDSNVEDADFKEVKDDDNQDNQK.

A Phosphothreonine; by autocatalysis modification is found at Thr-173. 2 stretches are compositionally biased toward basic and acidic residues: residues Glu-490–Ala-509 and Glu-529–Leu-542. Disordered regions lie at residues Glu-490–Asp-510, Gly-524–Lys-555, and Gln-575–Lys-614. The segment covering Gln-575–Gln-584 has biased composition (low complexity). The span at Ala-599–Lys-614 shows a compositional bias: basic and acidic residues.

Belongs to the heat shock protein 70 family.

Its function is as follows. Acts as a chaperone. The protein is Chaperone protein DnaK of Staphylococcus saprophyticus subsp. saprophyticus (strain ATCC 15305 / DSM 20229 / NCIMB 8711 / NCTC 7292 / S-41).